A 903-amino-acid polypeptide reads, in one-letter code: MAKTRVYELAKELKVTNKDLIDTMARLGIYTRSHMSVLENGEVIKVRNHYRQQWRAAKLARMHREQATLKGEGPVPTRGVPDAPRAEEVPSRQVPAPETGAPAQATGATRQPATGSARPANTDETRVQEHKPATAARQAGDAPAAEGTAAAGQPLDGKELRQAVANGQGTEEPRQQPAATGQRAQGGEAGRGQQSRQKKKRRGEGRSRQDENKGSAREDQANRFATRDKEAAPSAGQQSPAEKGQRRPAHSKPLRIPKPPEAVTKDLPEKRRDRSNARPGAKPAESGRSRKREMENQLEERLMRRDKNKGKAQKHKETPKVVFKITLTGSITVQELAKRIGKTAAEVIKYLMGQGIMATINQELDLETAALVAQDLGAIVEIKAEKPITELEDLVDPPETLRERPPVVTVMGHVDHGKTSLLDAIRRTNVTASEAGGITQHIGAYQVRLKNRKITFLDTPGHAAFTAMRARGAQATDIAILVVAADDGVMPQTIEAINHAKAAGVPIVVAINKIDRPEANPERVKQQLTEYGLVPEEWGGDTIMVPVSAVTKEGINDLLEMVLLTADVAELKANPDRPARGIVIEAKLDRGRGPVATMLVQKGTLKIGDNLVAGSVYGRVRAMIDDRGERVNSAPPSTPVEVLGLSELPEAGDIFQVVEDEKLARQIASSRQEEKRQEELKAASKTTLDDLFKQMEAGEVKELNLVIKGDVQGSVEALRGALEQLSTSEVKVNLLHGGVGAITETDVMLAAASKAIIIGFNVRPEANVRKAAEEAGVEIRLYRVIYEVIDDVKAAMSGLLEPEEREVILGRAEVRATFKVPKAGTVAGCFVTEGKIQNRALARVIRDGVVVFEGRIESLKRFKDDVREVAQGYECGVGLEKFNDIKEGDVIEAYTIEEIQREL.

The tract at residues 66 to 296 is disordered; the sequence is QATLKGEGPV…GRSRKREMEN (231 aa). Positions 121 to 132 are enriched in basic and acidic residues; sequence NTDETRVQEHKP. 2 stretches are compositionally biased toward low complexity: residues 139–152 and 178–195; these read AGDA…AAAG and AATG…GQQS. A compositionally biased stretch (basic and acidic residues) spans 204-231; the sequence is EGRSRQDENKGSAREDQANRFATRDKEA. A compositionally biased stretch (basic residues) spans 246 to 255; it reads RRPAHSKPLR. Composition is skewed to basic and acidic residues over residues 263–276 and 285–296; these read VTKD…DRSN and ESGRSRKREMEN. The region spanning 403-572 is the tr-type G domain; it reads ERPPVVTVMG…LLTADVAELK (170 aa). Residues 412–419 form a G1 region; sequence GHVDHGKT. 412 to 419 contributes to the GTP binding site; that stretch reads GHVDHGKT. The G2 stretch occupies residues 437–441; sequence GITQH. The G3 stretch occupies residues 458-461; the sequence is DTPG. GTP is bound by residues 458 to 462 and 512 to 515; these read DTPGH and NKID. The tract at residues 512-515 is G4; that stretch reads NKID. The tract at residues 548–550 is G5; the sequence is SAV.

It belongs to the TRAFAC class translation factor GTPase superfamily. Classic translation factor GTPase family. IF-2 subfamily.

It localises to the cytoplasm. Its function is as follows. One of the essential components for the initiation of protein synthesis. Protects formylmethionyl-tRNA from spontaneous hydrolysis and promotes its binding to the 30S ribosomal subunits. Also involved in the hydrolysis of GTP during the formation of the 70S ribosomal complex. The chain is Translation initiation factor IF-2 from Moorella thermoacetica (strain ATCC 39073 / JCM 9320).